The chain runs to 622 residues: Polyamine transporter 3 (622 aa).

Residues 1–47 (MNRQESINSFNSDETSSLSDVESQQPQQYIPSESGSKSNMAPNQLKL) are compositionally biased toward polar residues. Positions 1–76 (MNRQESINSF…VPDVNAPQSS (76 aa)) are disordered. Over 1-182 (MNRQESINSF…WPAWIRWSYT (182 aa)) the chain is Cytoplasmic. Serine 55 bears the Phosphoserine mark. At threonine 98 the chain carries Phosphothreonine. Residues serine 101 and serine 132 each carry the phosphoserine modification. The interval 105–152 (TSTAISRTRTRQIDGASSPSSNEDALESDNNEKGKEGDSSGANDEAPD) is disordered. A helical membrane pass occupies residues 183 to 203 (VLLSILVICVAYGSACISGGL). At 204-215 (GTVEKKYHVGME) the chain is on the extracellular side. The helical transmembrane segment at 216-236 (AAILSVSLMVIGFSLGPLIWS) threads the bilayer. At 237–245 (PVSDLYGRR) the chain is on the cytoplasmic side. The chain crosses the membrane as a helical span at residues 246–266 (VAYFVSMGLYVIFNIPCALAP). At 267-275 (NLGSLLACR) the chain is on the extracellular side. Residues 276-296 (FLCGVWSSSGLCLVGGSIADM) traverse the membrane as a helical segment. Residues 297–305 (FPSETRGKA) lie on the Cytoplasmic side of the membrane. The helical transmembrane segment at 306–326 (IAFFAFAPYVGPVVGPLVNGF) threads the bilayer. The Extracellular segment spans residues 327 to 335 (ISVSTGRMD). A helical membrane pass occupies residues 336–356 (LIFWVNMAFAGVMWIISSAIP). The Cytoplasmic segment spans residues 357-416 (ETYAPVILKRKAARLRKETGNPKIMTEQEAQGVSMGEMMRACLLRPLYFSVTEPVLVATC). A helical transmembrane segment spans residues 417–437 (FYVCLIYSLLYAFFFAFPVIF). Residues 438-446 (GELYGYKDN) are Extracellular-facing. A helical transmembrane segment spans residues 447 to 467 (LVGLMFIPIVIGALWALATTF). Residues 468-487 (YCENKYLQIVKQRKPTPEDR) lie on the Cytoplasmic side of the membrane. A helical membrane pass occupies residues 488–508 (LLGAKIGAPFAAIALWILGAT). Topologically, residues 509–512 (AYKH) are extracellular. Residues 513 to 533 (IIWVGPASAGLAFGFGMVLIY) traverse the membrane as a helical segment. The Cytoplasmic portion of the chain corresponds to 534 to 550 (YSLNNYIIDCYVQYASS). A helical membrane pass occupies residues 551-571 (ALATKVFLRSAGGAAFPLFTI). The Extracellular segment spans residues 572 to 583 (QMYHKLNLHWGS). Residues 584 to 604 (WLLAFISTAMIALPFAFSYWG) form a helical membrane-spanning segment. Topologically, residues 605-622 (KGLRHKLSKKDYSIDSIE) are cytoplasmic.

The protein belongs to the major facilitator superfamily. DHA1 family. Polyamines/proton antiporter (TC 2.A.1.2.16) subfamily.

The protein localises to the cell membrane. Cell membrane polyamine/proton antiporter, involved in the detoxification of excess polyamines in the cytoplasm. Recognizes spermine, but not spermidine. The chain is Polyamine transporter 3 (TPO3) from Saccharomyces cerevisiae (strain ATCC 204508 / S288c) (Baker's yeast).